The following is a 312-amino-acid chain: 4-hydroxyphenylacetate decarboxylase activating enzyme (312 aa).

The 284-residue stretch at 16 to 299 (HDGPGCRTSV…MEHLQQLYLD (284 aa)) folds into the Radical SAM core domain. The [4Fe-4S] cluster site is built by cysteine 30, cysteine 34, cysteine 37, cysteine 56, cysteine 62, cysteine 65, and cysteine 101. 36–38 (WCA) serves as a coordination point for S-adenosyl-L-methionine. 4Fe-4S ferredoxin-type domains follow at residues 47 to 79 (KHIM…FSED) and 80 to 112 (GKLK…CVKE). Residues glycine 140, 189–191 (DVK), and histidine 263 contribute to the S-adenosyl-L-methionine site.

It belongs to the organic radical-activating enzymes family. In terms of assembly, monomer. Requires [4Fe-4S] cluster as cofactor.

It catalyses the reaction glycyl-[protein] + reduced [flavodoxin] + S-adenosyl-L-methionine = glycin-2-yl radical-[protein] + semiquinone [flavodoxin] + 5'-deoxyadenosine + L-methionine + H(+). In terms of biological role, catalyzes activation of 4-hydroxyphenylacetate decarboxylase under anaerobic conditions by generation of an organic free radical on a glycine residue, via a homolytic cleavage of S-adenosyl-L-methionine (SAM). The chain is 4-hydroxyphenylacetate decarboxylase activating enzyme from Clostridium scatologenes.